Here is a 158-residue protein sequence, read N- to C-terminus: SsrA-binding protein (158 aa).

It belongs to the SmpB family.

It is found in the cytoplasm. Its function is as follows. Required for rescue of stalled ribosomes mediated by trans-translation. Binds to transfer-messenger RNA (tmRNA), required for stable association of tmRNA with ribosomes. tmRNA and SmpB together mimic tRNA shape, replacing the anticodon stem-loop with SmpB. tmRNA is encoded by the ssrA gene; the 2 termini fold to resemble tRNA(Ala) and it encodes a 'tag peptide', a short internal open reading frame. During trans-translation Ala-aminoacylated tmRNA acts like a tRNA, entering the A-site of stalled ribosomes, displacing the stalled mRNA. The ribosome then switches to translate the ORF on the tmRNA; the nascent peptide is terminated with the 'tag peptide' encoded by the tmRNA and targeted for degradation. The ribosome is freed to recommence translation, which seems to be the essential function of trans-translation. This Caldicellulosiruptor saccharolyticus (strain ATCC 43494 / DSM 8903 / Tp8T 6331) protein is SsrA-binding protein.